A 297-amino-acid polypeptide reads, in one-letter code: tRNA dimethylallyltransferase (297 aa).

Position 10-17 (alanine 10–threonine 17) interacts with ATP. Threonine 12–threonine 17 serves as a coordination point for substrate. Positions aspartate 34–glutamine 37 are interaction with substrate tRNA.

It belongs to the IPP transferase family. Monomer. Mg(2+) is required as a cofactor.

The enzyme catalyses adenosine(37) in tRNA + dimethylallyl diphosphate = N(6)-dimethylallyladenosine(37) in tRNA + diphosphate. Functionally, catalyzes the transfer of a dimethylallyl group onto the adenine at position 37 in tRNAs that read codons beginning with uridine, leading to the formation of N6-(dimethylallyl)adenosine (i(6)A). The protein is tRNA dimethylallyltransferase of Leptospira interrogans serogroup Icterohaemorrhagiae serovar Lai (strain 56601).